Reading from the N-terminus, the 300-residue chain is N-acetylmannosamine kinase (300 aa).

ATP contacts are provided by residues 5 to 12 (ALDIGGTK) and 132 to 139 (GVGGGIVL). His-156, Cys-166, Cys-168, and Cys-173 together coordinate Zn(2+).

This sequence belongs to the ROK (NagC/XylR) family. NanK subfamily. In terms of assembly, homodimer.

It catalyses the reaction an N-acyl-D-mannosamine + ATP = an N-acyl-D-mannosamine 6-phosphate + ADP + H(+). Its pathway is amino-sugar metabolism; N-acetylneuraminate degradation; D-fructose 6-phosphate from N-acetylneuraminate: step 2/5. Catalyzes the phosphorylation of N-acetylmannosamine (ManNAc) to ManNAc-6-P. The polypeptide is N-acetylmannosamine kinase (Haemophilus influenzae (strain 86-028NP)).